The sequence spans 619 residues: Chaperone protein DnaK (619 aa).

A Phosphothreonine; by autocatalysis modification is found at T175. Positions 578-619 are disordered; the sequence is NGGAQGQGFDPNNMGGANAGAGATNNNDDNVVDADFEVQDDK. Residues 589 to 606 are compositionally biased toward low complexity; the sequence is NNMGGANAGAGATNNNDD. Acidic residues predominate over residues 607–619; it reads NVVDADFEVQDDK.

It belongs to the heat shock protein 70 family.

Its function is as follows. Acts as a chaperone. The sequence is that of Chaperone protein DnaK from Clostridium perfringens (strain ATCC 13124 / DSM 756 / JCM 1290 / NCIMB 6125 / NCTC 8237 / Type A).